A 194-amino-acid chain; its full sequence is Dephospho-CoA kinase (194 aa).

The 192-residue stretch at 3–194 (TIGLTGGIGS…EQVDGFWGGL (192 aa)) folds into the DPCK domain. An ATP-binding site is contributed by 11-16 (GSGKST).

Belongs to the CoaE family.

The protein resides in the cytoplasm. The catalysed reaction is 3'-dephospho-CoA + ATP = ADP + CoA + H(+). Its pathway is cofactor biosynthesis; coenzyme A biosynthesis; CoA from (R)-pantothenate: step 5/5. Its function is as follows. Catalyzes the phosphorylation of the 3'-hydroxyl group of dephosphocoenzyme A to form coenzyme A. This chain is Dephospho-CoA kinase, found in Corynebacterium jeikeium (strain K411).